A 76-amino-acid chain; its full sequence is Esculentin-2MT2 (76 aa).

Positions 1–22 are cleaved as a signal peptide; it reads MFTLKKSMLLLFFLGTISLSLC. Positions 23-37 are cleaved as a propeptide — removed in mature form; that stretch reads EEERSADEDDGEKEV. The cysteines at positions 70 and 76 are disulfide-linked.

The protein belongs to the frog skin active peptide (FSAP) family. Esculentin subfamily. Expressed by the skin glands.

It localises to the secreted. In terms of biological role, antimicrobial peptide. Active against a variety of Gram-negative and Gram-positive bacterial strains. Active against fungi. Shows strong hemolytic activity against human erythrocytes. The protein is Esculentin-2MT2 of Amolops mantzorum (Sichuan torrent frog).